We begin with the raw amino-acid sequence, 507 residues long: Arylsulfatase A (507 aa).

Positions 1–18 (MEALWTLTLALAAGLAAA) are cleaved as a signal peptide. D29, D30, and C69 together coordinate Ca(2+). C69 (nucleophile) is an active-site residue. C69 carries the post-translational modification 3-oxoalanine (Cys). K123 lines the substrate pocket. H125 is an active-site residue. S150 serves as a coordination point for substrate. Disulfide bonds link C156–C172 and C161–C168. N-linked (GlcNAc...) asparagine glycosylation occurs at N158. N-linked (GlcNAc...) asparagine glycosylation is present at N184. Residue H229 participates in substrate binding. 2 residues coordinate Ca(2+): D281 and N282. 4 disulfides stabilise this stretch: C300–C414, C488–C500, C489–C502, and C493–C499. K302 contributes to the substrate binding site. N-linked (GlcNAc...) asparagine glycosylation is present at N350.

Belongs to the sulfatase family. In terms of assembly, homodimer at neutral pH and homooctamer at acidic pH. Exists both as a single chain of 58 kDa (component A) or as a chain of 50 kDa (component B) linked by disulfide bond(s) to a 7 kDa chain (component C). Interacts with SUMF1. It depends on Ca(2+) as a cofactor. In terms of processing, the conversion to 3-oxoalanine (also known as C-formylglycine, FGly), of a serine or cysteine residue in prokaryotes and of a cysteine residue in eukaryotes, is critical for catalytic activity. This post-translational modification is severely defective in multiple sulfatase deficiency (MSD).

It is found in the endoplasmic reticulum. The protein localises to the lysosome. The catalysed reaction is an N-acyl-1-beta-D-(3-O-sulfo)-galactosyl-sphing-4-enine + H2O = a beta-D-galactosyl-(1&lt;-&gt;1')-N-acylsphing-4-enine + sulfate + H(+). Its function is as follows. Hydrolyzes cerebroside sulfate. In Bos taurus (Bovine), this protein is Arylsulfatase A (ARSA).